The sequence spans 526 residues: Thymocyte selection-associated high mobility group box protein TOX (526 aa).

2 disordered regions span residues 138-178 (MPDI…PHGQ) and 192-264 (GLNM…PQKP). A compositionally biased stretch (polar residues) spans 192-203 (GLNMGGSNVPHN). The span at 209-220 (GSKSATPSPSSS) shows a compositional bias: low complexity. Positions 228–245 (DTSKINGGEKRPASDMGK) are enriched in basic and acidic residues. Positions 237-256 (KRPASDMGKKPKTPKKKKKK) match the Nuclear localization signal motif. Over residues 246–256 (KPKTPKKKKKK) the composition is skewed to basic residues. A DNA-binding region (HMG box) is located at residues 261-329 (PQKPVSAYAL…EYLKQLAAYR (69 aa)).

Belongs to the high motility group (HMG) box superfamily. In terms of assembly, interacts with HBO1 complex composed at least of KAT7/HBO1, ING4, MEAF6, and JADE2; this complex is involved in histone acetylation. Interacts with DNMT1, LEO1, PAF1, SAP130 and SIN3A; these interactors regulate chromatin remodeling. Interacts with an array of proteins involved in RNA processing and translation and DNA replication. Expressed in NK cells. Highly expressed in tumor-infiltrating CD8-positive T cells (at protein level).

The protein resides in the nucleus. Its function is as follows. Transcriptional regulator with a major role in neural stem cell commitment and corticogenesis as well as in lymphoid cell development and lymphoid tissue organogenesis. Binds to GC-rich DNA sequences in the proximity of transcription start sites and may alter chromatin structure, modifying access of transcription factors to DNA. During cortical development, controls the neural stem cell pool by inhibiting the switch from proliferative to differentiating progenitors. Beyond progenitor cells, promotes neurite outgrowth in newborn neurons migrating to reach the cortical plate. May activate or repress critical genes for neural stem cell fate such as SOX2, EOMES and ROBO2. Plays an essential role in the development of lymphoid tissue-inducer (LTi) cells, a subset necessary for the formation of secondary lymphoid organs: peripheral lymph nodes and Peyer's patches. Acts as a developmental checkpoint and regulates thymocyte positive selection toward T cell lineage commitment. Required for the development of various T cell subsets, including CD4-positive helper T cells, CD8-positive cytotoxic T cells, regulatory T cells and CD1D-dependent natural killer T (NKT) cells. Required for the differentiation of common lymphoid progenitors (CMP) to innate lymphoid cells (ILC). May regulate the NOTCH-mediated gene program, promoting differentiation of the ILC lineage. Required at the progenitor phase of NK cell development in the bone marrow to specify NK cell lineage commitment. Upon chronic antigen stimulation, diverts T cell development by promoting the generation of exhaustive T cells, while suppressing effector and memory T cell programming. May regulate the expression of genes encoding inhibitory receptors such as PDCD1 and induce the exhaustion program, to prevent the overstimulation of T cells and activation-induced cell death. The chain is Thymocyte selection-associated high mobility group box protein TOX from Homo sapiens (Human).